Consider the following 228-residue polypeptide: Ras-related protein Rab-32D (228 aa).

A GTP-binding site is contributed by G16–T23. The short motif at Y38–F46 is the Effector region element. Residues D64–Q68 and N128–D131 each bind GTP. Residues S183–K228 form a disordered region. Positions N185–T196 are enriched in acidic residues. The segment covering T211–K228 has biased composition (low complexity). C224 is lipidated: S-geranylgeranyl cysteine.

The protein belongs to the small GTPase superfamily. Rab family.

This is Ras-related protein Rab-32D (rab32D) from Dictyostelium discoideum (Social amoeba).